Here is a 324-residue protein sequence, read N- to C-terminus: Methenyltetrahydromethanopterin cyclohydrolase (324 aa).

Belongs to the MCH family.

The protein localises to the cytoplasm. It carries out the reaction 5,10-methenyl-5,6,7,8-tetrahydromethanopterin + H2O = N(5)-formyl-5,6,7,8-tetrahydromethanopterin + H(+). It participates in one-carbon metabolism; formaldehyde degradation; formate from formaldehyde (H(4)MPT route): step 3/5. In terms of biological role, catalyzes the hydrolysis of methenyl-H(4)MPT(+) to 5-formyl-H(4)MPT. The polypeptide is Methenyltetrahydromethanopterin cyclohydrolase (Methylobacterium sp. (strain 4-46)).